Reading from the N-terminus, the 69-residue chain is Large ribosomal subunit protein bL31 (69 aa).

Zn(2+) is bound by residues Cys16, Cys18, Cys38, and Cys41.

Belongs to the bacterial ribosomal protein bL31 family. Type A subfamily. In terms of assembly, part of the 50S ribosomal subunit. The cofactor is Zn(2+).

Binds the 23S rRNA. The polypeptide is Large ribosomal subunit protein bL31 (Thermobifida fusca (strain YX)).